Here is a 768-residue protein sequence, read N- to C-terminus: MIRLIRWNNVQSLVFKRCLFVPSNSLTNKRKRRIPPSKPRSSNRKDGDIEPYRMTDQNQTPNTGSIARLPAEVKKELKDLRSFTKVIAQHLKPEQENDSLTSAEKPDTSQLPPIDIEEATDDIFGEISGTKKLSANAVPPPPPPPGLDIPDEIKERLGLLSELLVPAKTSNNKLPEKQVENNWKLLLSQLDQAGGLSGLSKRSVSKFFSKIPPKNLKNLIPMIENMYNKAEMSIPHPIYYMFVRSLTLGDKISDSQMQLINKYFQEISKQTDLKIDHYETMILAYVKNNHMEKIDGILAQMKKKNIEISKMIYTSIVRGYIFYQKDHQRALDTFDSMKFLSQKTQPDEKVYTDVIVSCVMHREIERALDLYYELKDKGMNVNQNLLSTLAKGCSRSKQFKTQAWNFLFQVYDHGWVPNLQTYEHMLYIAARDGDVELTRVLFYKMLQTNSVTIRAFRYLILSYSKYVPPHKRKEKHLILLNHKGQLFRQNILQDVDFSKPVHGFPFLPSSHIPDSKFVLAESSAIWAHTVMNNPSFLRQQTLVASYVSIALELGDFTEFKDRFDSASYLNTDGIPKVREIEIIEPRQDEPTEKATTTEEQNASSETDNNSLIRSPILNQLQQNINDNQFKAPRDSYLYNLAIKAAGKFKNYGFAQEILHERGQFRKSNSFKLLSPKQQNQDDFQFAGYLVECWTNMNLLEDAYAVVLSSVDRFPWSWRELGVLNNAAMKLGSLELAEAVRKVAQVTQVKHHGKIKRQDFKTYVMKRGY.

Residues 1-90 constitute a mitochondrion transit peptide; sequence MIRLIRWNNV…RSFTKVIAQH (90 aa). 2 disordered regions span residues 28–65 and 90–114; these read NKRKRRIPPSKPRSSNRKDGDIEPYRMTDQNQTPNTGS and HLKPEQENDSLTSAEKPDTSQLPPI. Positions 43 to 53 are enriched in basic and acidic residues; that stretch reads NRKDGDIEPYR. The segment covering 55–65 has biased composition (polar residues); the sequence is TDQNQTPNTGS. 5 PPR repeats span residues 274–308, 309–344, 347–381, 382–417, and 418–452; these read KIDHYETMILAYVKNNHMEKIDGILAQMKKKNIEI, SKMIYTSIVRGYIFYQKDHQRALDTFDSMKFLSQKT, DEKVYTDVIVSCVMHREIERALDLYYELKDKGMNV, NQNLLSTLAKGCSRSKQFKTQAWNFLFQVYDHGWVP, and NLQTYEHMLYIAARDGDVELTRVLFYKMLQTNSVT. Positions 583-596 are enriched in basic and acidic residues; it reads IEPRQDEPTEKATT. A disordered region spans residues 583–609; that stretch reads IEPRQDEPTEKATTTEEQNASSETDNN. Positions 597 to 609 are enriched in polar residues; sequence TEEQNASSETDNN. One copy of the PPR 6 repeat lies at 634 to 664; that stretch reads DSYLYNLAIKAAGKFKNYGFAQEILHERGQF.

It belongs to the CCM1 family. In terms of assembly, binds to mitochondrial small subunit 15S rRNA.

Its subcellular location is the mitochondrion. In terms of biological role, regulates mitochondrial small subunit maturation by controlling 15S rRNA 5'-end processing. Localizes to the 5' precursor of the 15S rRNA in a position that is subsequently occupied by mS47 in the mature yeast mtSSU. Uses structure and sequence-specific RNA recognition, binding to a single-stranded region of the precursor and specifically recognizing bases -6 to -1. The exchange of Ccm1 for mS47 is coupled to the irreversible removal of precursor rRNA that is accompanied by conformational changes of the mitoribosomal proteins uS5m and mS26. These conformational changes signal completion of 5'-end rRNA processing through protection of the mature 5'-end of the 15S rRNA and stabilization of mS47. The removal of the 5' precursor together with the dissociation of Ccm1 may be catalyzed by the 5'-3' exoribonuclease Pet127. Involved in the specific removal of group I introns in mitochondrial encoded transcripts. The polypeptide is Mitochondrial 15S rRNA processing factor CCM1 (CCM1) (Candida albicans (strain SC5314 / ATCC MYA-2876) (Yeast)).